Reading from the N-terminus, the 64-residue chain is Neuropeptide-like 4 (64 aa).

The first 18 residues, 1 to 18 (MFKLLVVVFAALFAAALA), serve as a signal peptide directing secretion. 2 consecutive propeptides follow at residues 19-40 (VPAP…EPAP) and 63-64 (YG).

Its subcellular location is the secreted. This chain is Neuropeptide-like 4 (Nplp4), found in Drosophila melanogaster (Fruit fly).